A 420-amino-acid chain; its full sequence is Uteroferrin-associated basic protein 2 (420 aa).

The first 25 residues, 1–25, serve as a signal peptide directing secretion; it reads MSHGKMPLVLSLVLILCGLFNSISC. N-linked (GlcNAc...) asparagine glycans are attached at residues Asn-225, Asn-271, and Asn-343.

It belongs to the serpin family. UTMP subfamily.

The protein localises to the secreted. The protein resides in the extracellular space. The protein is Uteroferrin-associated basic protein 2 of Sus scrofa (Pig).